The sequence spans 140 residues: Small ribosomal subunit protein uS9A (140 aa).

Belongs to the universal ribosomal protein uS9 family. In terms of assembly, component of the small ribosomal subunit (SSU). Mature yeast ribosomes consist of a small (40S) and a large (60S) subunit. The 40S small subunit contains 1 molecule of ribosomal RNA (18S rRNA) and at least 33 different proteins. The large 60S subunit contains 3 rRNA molecules (25S, 5.8S and 5S rRNA) and at least 46 different proteins.

The protein localises to the cytoplasm. Component of the ribosome, a large ribonucleoprotein complex responsible for the synthesis of proteins in the cell. The small ribosomal subunit (SSU) binds messenger RNAs (mRNAs) and translates the encoded message by selecting cognate aminoacyl-transfer RNA (tRNA) molecules. The large subunit (LSU) contains the ribosomal catalytic site termed the peptidyl transferase center (PTC), which catalyzes the formation of peptide bonds, thereby polymerizing the amino acids delivered by tRNAs into a polypeptide chain. The nascent polypeptides leave the ribosome through a tunnel in the LSU and interact with protein factors that function in enzymatic processing, targeting, and the membrane insertion of nascent chains at the exit of the ribosomal tunnel. The protein is Small ribosomal subunit protein uS9A (rps1601) of Schizosaccharomyces pombe (strain 972 / ATCC 24843) (Fission yeast).